The sequence spans 116 residues: Putative iron-sulfur cluster insertion protein ErpA (116 aa).

3 residues coordinate iron-sulfur cluster: Cys44, Cys108, and Cys110.

It belongs to the HesB/IscA family. Homodimer. Iron-sulfur cluster is required as a cofactor.

In terms of biological role, required for insertion of 4Fe-4S clusters. The protein is Putative iron-sulfur cluster insertion protein ErpA of Azoarcus sp. (strain BH72).